The sequence spans 116 residues: Flagellar transcriptional regulator FlhD (116 aa).

It belongs to the FlhD family. As to quaternary structure, homodimer; disulfide-linked. Forms a heterohexamer composed of two FlhC and four FlhD subunits. Each FlhC binds a FlhD dimer, forming a heterotrimer, and a hexamer assembles by dimerization of two heterotrimers.

Its subcellular location is the cytoplasm. Functionally, functions in complex with FlhC as a master transcriptional regulator that regulates transcription of several flagellar and non-flagellar operons by binding to their promoter region. Activates expression of class 2 flagellar genes, including fliA, which is a flagellum-specific sigma factor that turns on the class 3 genes. Also regulates genes whose products function in a variety of physiological pathways. The chain is Flagellar transcriptional regulator FlhD from Yersinia pseudotuberculosis serotype O:1b (strain IP 31758).